Here is a 1058-residue protein sequence, read N- to C-terminus: Carbamoyl phosphate synthase large chain (1058 aa).

The tract at residues 1–401 (MAKRTDIKKI…CLLKACRSLE (401 aa)) is carboxyphosphate synthetic domain. The ATP site is built by Arg129, Arg169, Gly175, Gly176, Arg208, Ile210, Glu215, Gly241, Ile242, His243, Gln284, and Glu298. The 195-residue stretch at 133–327 (KQLMKELGEP…IAKIAAKIAV (195 aa)) folds into the ATP-grasp 1 domain. 3 residues coordinate Mg(2+): Gln284, Glu298, and Asn300. Mn(2+) is bound by residues Gln284, Glu298, and Asn300. The segment at 402–546 (IGVHHNELKG…YSTYEWENES (145 aa)) is oligomerization domain. The segment at 547-929 (IKSEKESVIV…ALYKAFEASY (383 aa)) is carbamoyl phosphate synthetic domain. Positions 671 to 861 (EKALKELGIP…MAQVATKLIL (191 aa)) constitute an ATP-grasp 2 domain. Arg707, Ser746, Ile748, Glu752, Gly777, Val778, His779, Ser780, Gln820, and Glu832 together coordinate ATP. Positions 820, 832, and 834 each coordinate Mg(2+). Mn(2+) contacts are provided by Gln820, Glu832, and Asn834. An MGS-like domain is found at 930–1058 (LHMPEYGTIV…ESRTFSIEAI (129 aa)). Residues 930-1058 (LHMPEYGTIV…ESRTFSIEAI (129 aa)) are allosteric domain.

The protein belongs to the CarB family. Composed of two chains; the small (or glutamine) chain promotes the hydrolysis of glutamine to ammonia, which is used by the large (or ammonia) chain to synthesize carbamoyl phosphate. Tetramer of heterodimers (alpha,beta)4. Mg(2+) is required as a cofactor. Mn(2+) serves as cofactor.

It catalyses the reaction hydrogencarbonate + L-glutamine + 2 ATP + H2O = carbamoyl phosphate + L-glutamate + 2 ADP + phosphate + 2 H(+). The enzyme catalyses hydrogencarbonate + NH4(+) + 2 ATP = carbamoyl phosphate + 2 ADP + phosphate + 2 H(+). The protein operates within amino-acid biosynthesis; L-arginine biosynthesis; carbamoyl phosphate from bicarbonate: step 1/1. It functions in the pathway pyrimidine metabolism; UMP biosynthesis via de novo pathway; (S)-dihydroorotate from bicarbonate: step 1/3. Large subunit of the glutamine-dependent carbamoyl phosphate synthetase (CPSase). CPSase catalyzes the formation of carbamoyl phosphate from the ammonia moiety of glutamine, carbonate, and phosphate donated by ATP, constituting the first step of 2 biosynthetic pathways, one leading to arginine and/or urea and the other to pyrimidine nucleotides. The large subunit (synthetase) binds the substrates ammonia (free or transferred from glutamine from the small subunit), hydrogencarbonate and ATP and carries out an ATP-coupled ligase reaction, activating hydrogencarbonate by forming carboxy phosphate which reacts with ammonia to form carbamoyl phosphate. The sequence is that of Carbamoyl phosphate synthase large chain from Streptococcus equi subsp. equi (strain 4047).